A 195-amino-acid polypeptide reads, in one-letter code: Protein GrpE (195 aa).

The span at Met-1 to Gln-24 shows a compositional bias: polar residues. Residues Met-1–Glu-40 form a disordered region.

The protein belongs to the GrpE family. As to quaternary structure, homodimer.

It is found in the cytoplasm. In terms of biological role, participates actively in the response to hyperosmotic and heat shock by preventing the aggregation of stress-denatured proteins, in association with DnaK and GrpE. It is the nucleotide exchange factor for DnaK and may function as a thermosensor. Unfolded proteins bind initially to DnaJ; upon interaction with the DnaJ-bound protein, DnaK hydrolyzes its bound ATP, resulting in the formation of a stable complex. GrpE releases ADP from DnaK; ATP binding to DnaK triggers the release of the substrate protein, thus completing the reaction cycle. Several rounds of ATP-dependent interactions between DnaJ, DnaK and GrpE are required for fully efficient folding. This Sodalis glossinidius (strain morsitans) protein is Protein GrpE.